A 354-amino-acid polypeptide reads, in one-letter code: Arginase-2, mitochondrial (354 aa).

A mitochondrion-targeting transit peptide spans 1-22; sequence MSLRGSLSRLLQTRVHSILKKS. Residues His-120, Asp-143, His-145, and Asp-147 each contribute to the Mn(2+) site. Residues 145-149, 156-158, and Asp-202 each bind substrate; these read HADIN and SGN. 2 residues coordinate Mn(2+): Asp-251 and Asp-253. Substrate-binding residues include Thr-265 and Glu-296. Positions 334–354 are disordered; that stretch reads YDQLPTPSSPDESENQARVRI.

It belongs to the arginase family. In terms of assembly, homotrimer. Requires Mn(2+) as cofactor. In terms of tissue distribution, expressed most strongly in kidney and prostate, much less strongly in the brain, skeletal muscle, placenta, lung, mammary gland, macrophage, uterus, testis and gut, but apparently not in the liver, heart and pancreas. Expressed in activated T cells.

It localises to the mitochondrion. The catalysed reaction is L-arginine + H2O = urea + L-ornithine. It participates in nitrogen metabolism; urea cycle; L-ornithine and urea from L-arginine: step 1/1. In terms of biological role, may play a role in the regulation of extra-urea cycle arginine metabolism and also in down-regulation of nitric oxide synthesis. Extrahepatic arginase functions to regulate L-arginine bioavailability to nitric oxid synthase (NOS). Arginine metabolism is a critical regulator of innate and adaptive immune responses. Seems to be involved in negative regulation of the survival capacity of activated CD4(+) and CD8(+) T cells. May suppress inflammation-related signaling in asthmatic airway epithelium. May contribute to the immune evasion of H.pylori by restricting M1 macrophage activation and polyamine metabolism. In fetal dendritic cells may play a role in promoting immune suppression and T cell TNF-alpha production during gestation. Regulates RPS6KB1 signaling, which promotes endothelial cell senescence and inflammation and implicates NOS3/eNOS dysfunction. Can inhibit endothelial autophagy independently of its enzymatic activity implicating mTORC2 signaling. Involved in vascular smooth muscle cell senescence and apoptosis independently of its enzymatic activity. Since NOS is found in the penile corpus cavernosum smooth muscle, the clitoral corpus cavernosum and the vagina, arginase-2 plays a role in both male and female sexual arousal. The sequence is that of Arginase-2, mitochondrial (ARG2) from Homo sapiens (Human).